A 106-amino-acid chain; its full sequence is Minor capsid protein VP2 (106 aa).

This sequence belongs to the vesivirus VP2 protein family. Homooligomer. The portal-like structure consists in 12 copies of VP2. Interacts with capsid protein VP1.

The protein resides in the virion. It is found in the host cytoplasm. Functionally, minor structural protein that forms a portal-like structure at a unique three-fold axis of symmetry, following binding to the host receptor. The virion attaches to feline junctional adhesion molecule A (F11R). Once attached, the virion is endocytosed. Acidification of the endosome induces conformational change of capsid protein thereby injecting virus genomic RNA into host cytoplasm. The channel formed by VP2 may allow the delivery of the viral genome through the host endosomal membrane. This Feline calicivirus (strain Japanese F4) (FCV) protein is Minor capsid protein VP2.